The primary structure comprises 193 residues: Potassium-transporting ATPase KdpC subunit (193 aa).

The chain crosses the membrane as a helical span at residues 7–27; it reads PLVVIFAVLTVVTGMAYPAVM.

It belongs to the KdpC family. As to quaternary structure, the system is composed of three essential subunits: KdpA, KdpB and KdpC.

Its subcellular location is the cell inner membrane. In terms of biological role, part of the high-affinity ATP-driven potassium transport (or Kdp) system, which catalyzes the hydrolysis of ATP coupled with the electrogenic transport of potassium into the cytoplasm. This subunit acts as a catalytic chaperone that increases the ATP-binding affinity of the ATP-hydrolyzing subunit KdpB by the formation of a transient KdpB/KdpC/ATP ternary complex. The chain is Potassium-transporting ATPase KdpC subunit from Burkholderia vietnamiensis (strain G4 / LMG 22486) (Burkholderia cepacia (strain R1808)).